Here is a 517-residue protein sequence, read N- to C-terminus: Intermediate filament family orphan 2 (517 aa).

In terms of domain architecture, IF rod spans 53-484 (NIHLLKGLNV…RLIKGSADRN (432 aa)). Disordered regions lie at residues 104–129 (EQAV…SSGA), 330–349 (KVAS…RFSD), and 478–517 (KGSA…PMVS). Over residues 485–497 (SPSPSSVASSDSG) the composition is skewed to low complexity. Residues 501–517 (EIQDEFEREADVEPMVS) show a composition bias toward acidic residues.

It belongs to the intermediate filament family.

The chain is Intermediate filament family orphan 2 (IFFO2) from Homo sapiens (Human).